Here is a 429-residue protein sequence, read N- to C-terminus: 3-phosphoshikimate 1-carboxyvinyltransferase (429 aa).

Residues Lys21, Ser22, and Arg26 each coordinate 3-phosphoshikimate. Lys21 serves as a coordination point for phosphoenolpyruvate. Phosphoenolpyruvate is bound by residues Gly94 and Arg122. The 3-phosphoshikimate site is built by Ser167, Gln169, Asp315, and Lys342. Gln169 contributes to the phosphoenolpyruvate binding site. Residue Asp315 is the Proton acceptor of the active site. Phosphoenolpyruvate contacts are provided by Arg346 and Arg388.

This sequence belongs to the EPSP synthase family. Monomer.

Its subcellular location is the cytoplasm. The enzyme catalyses 3-phosphoshikimate + phosphoenolpyruvate = 5-O-(1-carboxyvinyl)-3-phosphoshikimate + phosphate. It functions in the pathway metabolic intermediate biosynthesis; chorismate biosynthesis; chorismate from D-erythrose 4-phosphate and phosphoenolpyruvate: step 6/7. Catalyzes the transfer of the enolpyruvyl moiety of phosphoenolpyruvate (PEP) to the 5-hydroxyl of shikimate-3-phosphate (S3P) to produce enolpyruvyl shikimate-3-phosphate and inorganic phosphate. The sequence is that of 3-phosphoshikimate 1-carboxyvinyltransferase from Desulforamulus reducens (strain ATCC BAA-1160 / DSM 100696 / MI-1) (Desulfotomaculum reducens).